We begin with the raw amino-acid sequence, 376 residues long: Probable sister chromatid cohesion protein DCC1 (376 aa).

Positions 213 to 232 (QKSPTNSGGGGEEIKGGGGD) are disordered. The span at 219–232 (SGGGGEEIKGGGGD) shows a compositional bias: gly residues.

This sequence belongs to the DCC1 family.

The protein resides in the nucleus. In terms of biological role, loads PCNA onto primed templates regulating velocity, spacing and restart activity of replication forks. May couple DNA replication to sister chromatid cohesion. This is Probable sister chromatid cohesion protein DCC1 from Dictyostelium discoideum (Social amoeba).